Reading from the N-terminus, the 89-residue chain is Large ribosomal subunit protein bL31B (89 aa).

This sequence belongs to the bacterial ribosomal protein bL31 family. Type B subfamily. Part of the 50S ribosomal subunit.

This Aeromonas salmonicida (strain A449) protein is Large ribosomal subunit protein bL31B.